Consider the following 216-residue polypeptide: Probable nicotinate-nucleotide adenylyltransferase (216 aa).

This sequence belongs to the NadD family.

It carries out the reaction nicotinate beta-D-ribonucleotide + ATP + H(+) = deamido-NAD(+) + diphosphate. Its pathway is cofactor biosynthesis; NAD(+) biosynthesis; deamido-NAD(+) from nicotinate D-ribonucleotide: step 1/1. Catalyzes the reversible adenylation of nicotinate mononucleotide (NaMN) to nicotinic acid adenine dinucleotide (NaAD). This is Probable nicotinate-nucleotide adenylyltransferase from Shewanella baltica (strain OS185).